The primary structure comprises 465 residues: Iron-sulfur cluster assembly SufBD family protein SAUSA300_0822 (465 aa).

The protein belongs to the iron-sulfur cluster assembly SufBD family.

The chain is Iron-sulfur cluster assembly SufBD family protein SAUSA300_0822 from Staphylococcus aureus (strain USA300).